A 519-amino-acid polypeptide reads, in one-letter code: MAGGAMVQTVGGKTYPGKMTAFVFFTCLVASSGGLIFGYDIGISGGVTSMDSFLSEFFPSVYAQAKASKDTNQYCKFDSQLLTLFTSSLYLAALATSFVAAWVTRVFGRKWSMFCGGVTFLAGSALNGAATDVMMLILGRILLGIGVGFANQSVPLYLSEMAPANLRGMLNIGFQLMTTIGILSANLINYATSSIEGGWGWRIGLGLAGVPALIITLGALVLPDTPNSLIARGYAGDAKRVLVKIRGTDDVHDEYDDMVAASEEAASIEHPWRNILHRKYRPQLTIAILIPCFQQLTGINVIMFYAPVLFLTIGFAGDASLMSAVITGLVNMFATVVSIISVDRLGRRVLFLQGGTQMFISQVVVGTLIALQFGVAGVGEMSRSYAILLVLFICMYVAGFAWSWGPLGWLVPSEVFALEIRSAGQSIAVCVNMMLTFVIGQAFLTMLCHLKFGLFYFFAGWMLVMTTFVALFLPETKGVPIEEMNHVWSRHWFWGSYVTAHDVAGAGAGGGGNRRSHNV.

Residues M1–K18 lie on the Cytoplasmic side of the membrane. The chain crosses the membrane as a helical span at residues M19–Y39. Topologically, residues D40–Q80 are extracellular. A helical membrane pass occupies residues L81–A101. Over W102–K110 the chain is Cytoplasmic. A helical membrane pass occupies residues W111–N127. A topological domain (extracellular) is located at residue G128. Residues A129 to F149 traverse the membrane as a helical segment. The Cytoplasmic portion of the chain corresponds to A150 to R167. The chain crosses the membrane as a helical span at residues G168–I188. Topologically, residues N189–R202 are extracellular. The helical transmembrane segment at I203–P223 threads the bilayer. The Cytoplasmic portion of the chain corresponds to D224–Q295. Residues L296–A316 form a helical membrane-spanning segment. At G317–L321 the chain is on the extracellular side. The chain crosses the membrane as a helical span at residues M322 to V342. At D343–Q357 the chain is on the cytoplasmic side. A helical transmembrane segment spans residues M358–V378. The Extracellular segment spans residues G379 to A386. A helical membrane pass occupies residues I387 to L407. Residues G408–S426 are Cytoplasmic-facing. The helical transmembrane segment at I427–L447 threads the bilayer. The Extracellular segment spans residues C448–K451. A helical transmembrane segment spans residues F452–F472. Over L473–V519 the chain is Cytoplasmic.

This sequence belongs to the major facilitator superfamily. Sugar transporter (TC 2.A.1.1) family. In terms of tissue distribution, expressed in panicles before heading. Expressed in flowers before pollination.

The protein localises to the membrane. Mediates active uptake of hexoses by sugar:proton symport. Can transport glucose, xylose and 3-O-methylglucose. May play a role at the early stage of seed development. This chain is Sugar transport protein MST5, found in Oryza sativa subsp. japonica (Rice).